The sequence spans 131 residues: Small ribosomal subunit protein bS6 (131 aa).

Residues 92–131 form a disordered region; that stretch reads RVDEHKDGPSVQMQKRDERERGDRGDRGERRERRDRDDRN.

The protein belongs to the bacterial ribosomal protein bS6 family.

Its function is as follows. Binds together with bS18 to 16S ribosomal RNA. The protein is Small ribosomal subunit protein bS6 of Paracoccus denitrificans (strain Pd 1222).